Consider the following 380-residue polypeptide: MKWLVLLGLVAFSECIVKIPLRRLKTMRNVVSGKNMLNNFLKEHAYSLSQISFRGSNLTTHPLRNIKDLVYMGNITIGTPPQEFQVVFDTASSDLWVPSDFCTSPACSTHVRFRHLQSSTFRLTNKTFRITYGSGRMKGVVVHDTVRIGNLVSTDQPFGLSIEEYGFEGRIYDGVLGLNYPNISFSGAIPIFDKLKNQRAISEPVFAFYLSKDEREGSVVMFGGVDHRYYEGELNWVPLIQAGDWSVHMDRISIERKIIACSDGCKALVDTGTSDIVGPRRLVNNIHRLIGAIPRGSEHYVPCSEVNTLPSIVFTINGINYPVPGRAYILKDDRGRCYTTFQENRVSSSTETWYLGDVFLRLYFSVFDRGNDRIGLARAV.

Residues 1-15 form the signal peptide; sequence MKWLVLLGLVAFSEC. Positions 16–53 are cleaved as a propeptide — activation peptide; the sequence is IVKIPLRRLKTMRNVVSGKNMLNNFLKEHAYSLSQISF. Residues Asn57 and Asn74 are each glycosylated (N-linked (GlcNAc...) asparagine). The Peptidase A1 domain occupies 71-377; that stretch reads YMGNITIGTP…DRGNDRIGLA (307 aa). The active site involves Asp89. An intrachain disulfide couples Cys102 to Cys107. Asn125 and Asn182 each carry an N-linked (GlcNAc...) asparagine glycan. Cys261 and Cys265 form a disulfide bridge. Asp270 is a catalytic residue. An intrachain disulfide couples Cys303 to Cys337.

It belongs to the peptidase A1 family. N-Glycosylated; the glycans terminate in either N-acetyl-galactosamine (GalNAc) or N-acetyllactosamine. Terminal GalNAc on Asn-linked glycans is greatly reduced prior to parturition while lactosamine-type N-glycans remain unaltered. Trophoblast and placental tissue. Produced specifically in the invasive binucleate cells of the placenta. Becomes detectable in maternal serum soon after implantation.

The protein localises to the secreted. It is found in the extracellular space. In terms of biological role, appears to be proteolytically inactive. The chain is Pregnancy-associated glycoprotein 1 from Bos taurus (Bovine).